A 488-amino-acid chain; its full sequence is Glutamyl-tRNA(Gln) amidotransferase subunit A (488 aa).

Active-site charge relay system residues include Lys79 and Ser159. Ser183 acts as the Acyl-ester intermediate in catalysis.

The protein belongs to the amidase family. GatA subfamily. Heterotrimer of A, B and C subunits.

It catalyses the reaction L-glutamyl-tRNA(Gln) + L-glutamine + ATP + H2O = L-glutaminyl-tRNA(Gln) + L-glutamate + ADP + phosphate + H(+). Allows the formation of correctly charged Gln-tRNA(Gln) through the transamidation of misacylated Glu-tRNA(Gln) in organisms which lack glutaminyl-tRNA synthetase. The reaction takes place in the presence of glutamine and ATP through an activated gamma-phospho-Glu-tRNA(Gln). The chain is Glutamyl-tRNA(Gln) amidotransferase subunit A from Wolbachia pipientis subsp. Culex pipiens (strain wPip).